A 557-amino-acid polypeptide reads, in one-letter code: Polypyrimidine tract-binding protein 1 (557 aa).

The residue at position 1 (M1) is an N-acetylmethionine. S16 carries the post-translational modification Phosphoserine. 3 RRM domains span residues 59–143 (RVIH…SSPN), 184–260 (LRII…FSKL), and 363–437 (SVLL…LSKH). K65 participates in a covalent cross-link: Glycyl lysine isopeptide (Lys-Gly) (interchain with G-Cter in SUMO2). Y127 is subject to Phosphotyrosine. T138 carries the phosphothreonine modification. At S141 the chain carries Phosphoserine. A Glycyl lysine isopeptide (Lys-Gly) (interchain with G-Cter in SUMO2) cross-link involves residue K218. S459 carries the post-translational modification Phosphoserine. The region spanning 480–555 (ATLHLSNIPP…HHLRVSFSKS (76 aa)) is the RRM 4 domain.

Monomer. Part of a ternary complex containing KHSRP, PTBP1, PTBP2 and HNRPH1. Interacts with RAVER1 and SFPQ. Interacts with IVNS1ABP (via BACK domain); the interaction is direct.

The protein localises to the nucleus. In terms of biological role, plays a role in pre-mRNA splicing and in the regulation of alternative splicing events. Activates exon skipping of its own pre-mRNA during muscle cell differentiation. Binds to the polypyrimidine tract of introns. May promote RNA looping when bound to two separate polypyrimidine tracts in the same pre-mRNA. May promote the binding of U2 snRNP to pre-mRNA. Cooperates with RAVER1 to modulate switching between mutually exclusive exons during maturation of the TPM1 pre-mRNA. Represses the splicing of MAPT/Tau exon 10. Binds to polypyrimidine-rich controlling element (PCE) of CFTR and promotes exon skipping of CFTR exon 9, thereby antagonizing TIA1 and its role in exon inclusion of CFTR exon 9. Plays a role in the splicing of pyruvate kinase PKM by binding repressively to a polypyrimidine tract flanking PKM exon 9, inhibiting exon 9 inclusion and resulting in exon 10 inclusion and production of the PKM M2 isoform. In case of infection by picornaviruses, binds to the viral internal ribosome entry site (IRES) and stimulates the IRES-mediated translation. The sequence is that of Polypyrimidine tract-binding protein 1 (PTBP1) from Homo sapiens (Human).